The chain runs to 330 residues: Aspartate--ammonia ligase (330 aa).

The protein belongs to the class-II aminoacyl-tRNA synthetase family. AsnA subfamily. Homodimer.

It localises to the cytoplasm. It catalyses the reaction L-aspartate + NH4(+) + ATP = L-asparagine + AMP + diphosphate + H(+). The protein operates within amino-acid biosynthesis; L-asparagine biosynthesis; L-asparagine from L-aspartate (ammonia route): step 1/1. The protein is Aspartate--ammonia ligase of Salmonella typhimurium (strain LT2 / SGSC1412 / ATCC 700720).